The following is a 299-amino-acid chain: Probable lipid kinase YegS (299 aa).

The DAGKc domain occupies 2–133; it reads AEFPASLLIL…IDMAQVNKQT (132 aa). Residues Thr-40, 66 to 72, and Thr-95 contribute to the ATP site; that span reads GDGTINE. Positions 215, 218, and 220 each coordinate Mg(2+). Catalysis depends on Glu-271, which acts as the Proton acceptor.

This sequence belongs to the diacylglycerol/lipid kinase family. YegS lipid kinase subfamily. Requires Mg(2+) as cofactor. Ca(2+) serves as cofactor.

Its subcellular location is the cytoplasm. In terms of biological role, probably phosphorylates lipids; the in vivo substrate is unknown. The protein is Probable lipid kinase YegS of Escherichia coli O17:K52:H18 (strain UMN026 / ExPEC).